The primary structure comprises 35 residues: Coatomer subunit alpha (35 aa).

As to quaternary structure, oligomeric complex that consists of at least the alpha, beta, beta', gamma, delta, epsilon and zeta subunits. Interacts with SCYL1. Interacts with JAGN1. Interacts with TMEM41B. Interacts with SVEP1. Probably interacts with PEX11A. Gastric, duodenal and jejunal mucosa. Circulates in the blood. Seems to be confined to specific endocrine cells.

Its function is as follows. Xenin stimulates exocrine pancreatic secretion. It inhibits pentagastrin-stimulated secretion of acid, to induce exocrine pancreatic secretion and to affect small and large intestinal motility. In the gut, xenin interacts with the neurotensin receptor. This chain is Coatomer subunit alpha (COPA), found in Canis lupus familiaris (Dog).